The chain runs to 502 residues: MAGVSPVVNHPYTTNSGDFIELGMEPAQKVQVDLDEAFNQMLHDGKVEEVVEAINGSPDLLSESDVENAKNNEHTYDIDNKNFNFEPKNSVNKTETIREELDQAASKILIETLDLHQKEGFEETIVTEEATDAVDLEAKGTTHGENDLDEVPTELNELANEVVDVDDVVSPSSELNAQSVNNILPISDDPKDSTSEAETRDFNWLSKGIVIFPNSSECAFYGNNNDEGMYLYSNGDDLNENTIEDFFGLVRARLESLNLLDSDSELLCEFPDLSLKINEDNVYASQIHLVDILEILTVHCDLEESFSIVFSTQPRFIARYNELVQAVSSSSNSEIDEVEDAETIDSKILEKRNDLNNEEPNSVVAEDGSEIITLDENDQSPNEATEKLRDNDLEESLIKDENLEDVEDENVKLDNYNIDGSLNNADLSQEPITNDGENVDWEATSEDVLERGYESAFPESEGTINSSKRRLSVTTDTENIELSDELASAGTPKKSKLMPSDD.

3 positions are modified to phosphoserine: S328, S330, and S331. Disordered stretches follow at residues 353–391 (NDLN…LRDN), 420–440 (GSLN…ENVD), and 454–502 (ESAF…PSDD). The span at 367 to 378 (DGSEIITLDEND) shows a compositional bias: acidic residues. 2 stretches are compositionally biased toward polar residues: residues 420-436 (GSLN…TNDG) and 462-477 (GTIN…TTDT).

It belongs to the RMR1 family.

The protein localises to the cytoplasm. It localises to the nucleus. Functionally, required for normal levels of gene conversion events during meiosis. This Schizosaccharomyces pombe (strain 972 / ATCC 24843) (Fission yeast) protein is Reduced meiotic recombination protein C1442.04c.